The primary structure comprises 196 residues: Large ribosomal subunit protein bL25 (196 aa).

The segment at 177-196 is disordered; it reads VISIAPPKKDAEAETESAAG.

It belongs to the bacterial ribosomal protein bL25 family. CTC subfamily. In terms of assembly, part of the 50S ribosomal subunit; part of the 5S rRNA/L5/L18/L25 subcomplex. Contacts the 5S rRNA. Binds to the 5S rRNA independently of L5 and L18.

Its function is as follows. This is one of the proteins that binds to the 5S RNA in the ribosome where it forms part of the central protuberance. The polypeptide is Large ribosomal subunit protein bL25 (Chlorobium limicola (strain DSM 245 / NBRC 103803 / 6330)).